The primary structure comprises 85 residues: Large ribosomal subunit protein bL27 (85 aa).

Positions 1-22 are disordered; sequence MAHKKGASSTRNGRDSNAQRLG. Polar residues predominate over residues 7 to 19; that stretch reads ASSTRNGRDSNAQ.

It belongs to the bacterial ribosomal protein bL27 family.

This Streptomyces griseus protein is Large ribosomal subunit protein bL27 (rpmA).